We begin with the raw amino-acid sequence, 160 residues long: MAVTKKPDLSDPVLRAKLAKGMGHNYYGEPAWPNDLLYMFPVVILGTFALSISLAVLAPAAMGEPANPFATPLEILPEWYFYPVFQILRVVPNKLLGVLCMAAVPVGLITVPFIESINKFQNPFRRPIASTLFLFGTATAVWLGIGAALPIDISLTLGLF.

Transmembrane regions (helical) follow at residues 36–56 (LLYM…SLAV), 95–115 (LLGV…PFIE), and 131–151 (TLFL…ALPI).

This sequence belongs to the cytochrome b family. PetD subfamily. As to quaternary structure, the 4 large subunits of the cytochrome b6-f complex are cytochrome b6, subunit IV (17 kDa polypeptide, petD), cytochrome f and the Rieske protein, while the 4 small subunits are petG, petL, petM and petN. The complex functions as a dimer.

It is found in the plastid. The protein localises to the chloroplast thylakoid membrane. Component of the cytochrome b6-f complex, which mediates electron transfer between photosystem II (PSII) and photosystem I (PSI), cyclic electron flow around PSI, and state transitions. The polypeptide is Cytochrome b6-f complex subunit 4 (Oltmannsiellopsis viridis (Marine flagellate)).